We begin with the raw amino-acid sequence, 170 residues long: uncharacterized protein (170 aa).

3 consecutive transmembrane segments (helical) span residues 31 to 51 (ILAV…FYIF), 58 to 78 (LFLI…LLLF), and 133 to 153 (IDFI…MLLF).

This sequence to M.jannaschii MJ0554 and MJ0587.

It is found in the cell membrane. This is an uncharacterized protein from Methanocaldococcus jannaschii (strain ATCC 43067 / DSM 2661 / JAL-1 / JCM 10045 / NBRC 100440) (Methanococcus jannaschii).